The following is a 202-amino-acid chain: Adapter protein MecA 2 (202 aa).

This sequence belongs to the MecA family. Homodimer.

In terms of biological role, enables the recognition and targeting of unfolded and aggregated proteins to the ClpC protease or to other proteins involved in proteolysis. Acts negatively in the development of competence by binding ComK and recruiting it to the ClpCP protease. When overexpressed, inhibits sporulation. Also involved in Spx degradation by ClpC. The chain is Adapter protein MecA 2 (mecA2) from Bacillus cereus (strain ATCC 14579 / DSM 31 / CCUG 7414 / JCM 2152 / NBRC 15305 / NCIMB 9373 / NCTC 2599 / NRRL B-3711).